Here is a 110-residue protein sequence, read N- to C-terminus: uncharacterized protein (110 aa).

The stretch at 16-46 (ELDKLRECEERLSVIEKQKQSSKQESEETYI) forms a coiled coil. The span at 85 to 96 (EEKDKKCQRKPE) shows a compositional bias: basic and acidic residues. The tract at residues 85-110 (EEKDKKCQRKPEAPSTPAVTIRSKRQ) is disordered.

This is an uncharacterized protein from Bacillus subtilis (strain 168).